The primary structure comprises 526 residues: WRKY transcription factor 72A (526 aa).

2 stretches are compositionally biased toward basic and acidic residues: residues 40–52 (KERK…DDNS) and 60–76 (LTGD…KADM). Disordered stretches follow at residues 40–76 (KERK…KADM) and 170–200 (SSTK…QTWP). Positions 62–106 (GDKKDDQLESAKADMEEVMEENQRLKKHLDKIMKDYRNLQMQFHE) form a coiled coil. Low complexity predominate over residues 170-185 (SSTKSSPSNLSPENSL). Positions 232 to 298 (CDTPTMNDGC…YEGTHNHPLP (67 aa)) form a DNA-binding region, WRKY.

The protein belongs to the WRKY group II-b family. As to expression, expressed in roots, trichomes and fruits.

It is found in the nucleus. Functionally, transcription activator involved in the transcriptional regulation of terpene biosynthesis in glandular trichomes. Binds to the promoter of the linalool synthase TPS5 and promotes TPS5 gene transactivation. In association with WRKY72B, contributes to basal defense against root-knot nematodes (RKNs) and potato aphids, as well as Mi-1-mediated gene-for-gene resistance to these pests. Both WRKY72A and WRKY72B are not required for gene-for-gene resistance mediated by Pto, another tomato R gene. This Solanum lycopersicum (Tomato) protein is WRKY transcription factor 72A.